The primary structure comprises 444 residues: UDP-N-acetylmuramate--L-alanine ligase (444 aa).

110 to 116 (GAHGKTS) contributes to the ATP binding site.

Belongs to the MurCDEF family.

The protein resides in the cytoplasm. The enzyme catalyses UDP-N-acetyl-alpha-D-muramate + L-alanine + ATP = UDP-N-acetyl-alpha-D-muramoyl-L-alanine + ADP + phosphate + H(+). It functions in the pathway cell wall biogenesis; peptidoglycan biosynthesis. Its function is as follows. Cell wall formation. This is UDP-N-acetylmuramate--L-alanine ligase from Streptococcus pneumoniae (strain CGSP14).